Consider the following 150-residue polypeptide: MKQSTELMTFFKALLEKEHFSSQGEIVEALVNAGFNNINQSKVSRMLSKSGAVRTRNAKQEMLYCLPAELGIPIITSPLKNLVLDIDRNDSMIVIRTSPGAAQLIARLLDSIGKTEGILGNIAGDDTIFTTPTNSKKIQETMNIIKNLFN.

This sequence belongs to the ArgR family.

The protein localises to the cytoplasm. Its pathway is amino-acid biosynthesis; L-arginine biosynthesis [regulation]. Regulates arginine biosynthesis genes. The chain is Arginine repressor from Psychromonas ingrahamii (strain DSM 17664 / CCUG 51855 / 37).